Reading from the N-terminus, the 650-residue chain is Glycoprotein antigen BM86 (650 aa).

The signal sequence occupies residues 1 to 19 (MRGIALFVAAVSLIVEGTA). EGF-like domains lie at 20–66 (ESSI…KQCE) and 67–104 (YKDT…LQCK). Intrachain disulfides connect cysteine 24-cysteine 37, cysteine 32-cysteine 49, cysteine 51-cysteine 65, cysteine 71-cysteine 81, cysteine 76-cysteine 91, and cysteine 93-cysteine 103. N-linked (GlcNAc...) asparagine glycosylation is found at asparagine 141 and asparagine 182. EGF-like domains are found at residues 205-247 (CINA…ITCK), 251-292 (HTVS…DTCI), and 291-335 (CISD…NECL). 9 disulfide bridges follow: cysteine 209-cysteine 222, cysteine 218-cysteine 231, cysteine 233-cysteine 246, cysteine 255-cysteine 269, cysteine 263-cysteine 278, cysteine 280-cysteine 291, cysteine 295-cysteine 307, cysteine 300-cysteine 316, and cysteine 318-cysteine 334. N-linked (GlcNAc...) asparagine glycosylation is found at asparagine 348 and asparagine 382. EGF-like domains follow at residues 482-530 (RRSV…IGCI) and 531-568 (ERTT…HECY). Cystine bridges form between cysteine 486–cysteine 500, cysteine 492–cysteine 516, cysteine 518–cysteine 529, cysteine 535–cysteine 550, cysteine 543–cysteine 559, and cysteine 561–cysteine 567. A disordered region spans residues 603-628 (KSEATTAATTTTKAKDKDPDPGKSSA). Residue serine 627 is the site of GPI-anchor amidated serine attachment. Positions 628 to 650 (AAAVSATGLLLLLAATSVTAASL) are cleaved as a propeptide — removed in mature form.

The protein resides in the cell membrane. The sequence is that of Glycoprotein antigen BM86 from Rhipicephalus microplus (Cattle tick).